The following is a 221-amino-acid chain: MFYYTYKITNKINNKIYIGVHSTENLDDGYMGSGKLLKRAQDKYGIENFSKEILEYFDDKESMLEAEKNIVTEEFLNRPDVYNLKLGGEGGWDHVNIPGMLNQKKDASLKGAKSFKSRFENDILLQEKYRKIGSNVFKRLWSTPEYREKFLNNSRFLNKHHTPETINKMKESHAKNNHQKGEKNSQFGMMWIHSLDEKVSKRIKKTDPIPEGWFKGRKMKF.

The GIY-YIG domain maps to 1-84 (MFYYTYKITN…FLNRPDVYNL (84 aa)).

This sequence to endonucleases of group I introns of fungi and phage. The cofactor is Mg(2+).

In terms of biological role, probably involved in the movement of the endonuclease-encoding DNA. The protein is Putative endonuclease segB (segB) of Enterobacteria phage T4 (Bacteriophage T4).